We begin with the raw amino-acid sequence, 568 residues long: MSLCDQCEIGCRRVGIKDIEDASAVNADFHFSAIFQPTDPHHHQTEFAKVEGSEKYVEEVEVFGRQALKVNPEALTILAHRAFSDVHHFFRKDHLEGWRRAIEDPEASDNDRYVATTLLKNACIAAGRVLPSCQDTGTAIVLGKRGELCWTGGEDEKYLSKGIWNAYRYHNLRYSQTAALDMFKECNTGDNLPAQLDLLAVPGSDYEFLFIAKGGGSANKAYLYQETKALLNPKSLRAFIEEKLKTLGTAACPPYHIALVIGGTSAEMTMKTVKLASCRYYDSLPTTGDKYGRAFRDPEWEKIVMEVAQKSGIGAQFGGKYFAHQARVIRLPRHGASCPVGLAVSCSADRQILAHINKSGIYIEQLEQNPAQYLPDIPEVHLSTTSVKVDLKRPIDKVRQQLSQYPVGTRVMLNGTLIVARDIAHAKIKEMMDNGEPLPEYMKTSPIYYAGPAKTPEGYASGSFGPTTAGRMDSYVDLFQSHGGSYITLAKGNRSKQVTDACKKHGGFYLGSIGGPAAILAKDSIKQVTCLAFPELGMEAVWKIEVEDFPAFIVVDDKGNDMYSKTLA.

Position 133 (Cys-133) interacts with [4Fe-4S] cluster. Residues 134–135 (QD), Arg-173, Gly-216, and 219–225 (NKAYLYQ) contribute to the (S)-malate site. [4Fe-4S] cluster is bound by residues Cys-252 and Cys-346. (S)-malate-binding positions include Arg-421, 467-471 (TTAGR), and Lys-491.

Belongs to the class-I fumarase family. As to quaternary structure, homodimer. It depends on [4Fe-4S] cluster as a cofactor.

Its subcellular location is the cytoplasm. The protein resides in the cytosol. The catalysed reaction is (S)-malate = fumarate + H2O. Specifically and competitively inhibited by 2-thiomalate, which coordinates with the catalytic [4Fe-4S] cluster. Weakly inhibited by malonate. In terms of biological role, cytosolic fumarate hydratase that catalyzes the reversible hydration of fumarate to (S)-malate. This Leishmania major protein is Fumarate hydratase 2.